Reading from the N-terminus, the 469-residue chain is Ribulose bisphosphate carboxylase large chain (469 aa).

Lys8 is subject to N6,N6,N6-trimethyllysine. The substrate site is built by Asn117 and Thr167. Lys169 functions as the Proton acceptor in the catalytic mechanism. Residue Lys171 participates in substrate binding. Mg(2+)-binding residues include Lys195, Asp197, and Glu198. Position 195 is an N6-carboxylysine (Lys195). His288 acts as the Proton acceptor in catalysis. Substrate is bound by residues Arg289, His321, and Ser373.

This sequence belongs to the RuBisCO large chain family. Type I subfamily. Heterohexadecamer of 8 large chains and 8 small chains; disulfide-linked. The disulfide link is formed within the large subunit homodimers. The cofactor is Mg(2+). Post-translationally, the disulfide bond which can form in the large chain dimeric partners within the hexadecamer appears to be associated with oxidative stress and protein turnover.

The protein resides in the plastid. It is found in the chloroplast. The enzyme catalyses 2 (2R)-3-phosphoglycerate + 2 H(+) = D-ribulose 1,5-bisphosphate + CO2 + H2O. The catalysed reaction is D-ribulose 1,5-bisphosphate + O2 = 2-phosphoglycolate + (2R)-3-phosphoglycerate + 2 H(+). Its function is as follows. RuBisCO catalyzes two reactions: the carboxylation of D-ribulose 1,5-bisphosphate, the primary event in carbon dioxide fixation, as well as the oxidative fragmentation of the pentose substrate in the photorespiration process. Both reactions occur simultaneously and in competition at the same active site. This is Ribulose bisphosphate carboxylase large chain from Persicaria senticosa (Knotweed).